Here is a 427-residue protein sequence, read N- to C-terminus: Enolase (427 aa).

Residue glutamine 163 participates in (2R)-2-phosphoglycerate binding. The active-site Proton donor is the glutamate 205. Residues aspartate 242, glutamate 283, and aspartate 310 each contribute to the Mg(2+) site. Positions 335, 364, 365, and 386 each coordinate (2R)-2-phosphoglycerate. The active-site Proton acceptor is the lysine 335.

This sequence belongs to the enolase family. Mg(2+) is required as a cofactor.

It localises to the cytoplasm. It is found in the secreted. The protein resides in the cell surface. It carries out the reaction (2R)-2-phosphoglycerate = phosphoenolpyruvate + H2O. Its pathway is carbohydrate degradation; glycolysis; pyruvate from D-glyceraldehyde 3-phosphate: step 4/5. Functionally, catalyzes the reversible conversion of 2-phosphoglycerate (2-PG) into phosphoenolpyruvate (PEP). It is essential for the degradation of carbohydrates via glycolysis. This is Enolase from Salinispora tropica (strain ATCC BAA-916 / DSM 44818 / JCM 13857 / NBRC 105044 / CNB-440).